A 374-amino-acid chain; its full sequence is UDP-N-acetylglucosamine--N-acetylmuramyl-(pentapeptide) pyrophosphoryl-undecaprenol N-acetylglucosamine transferase (374 aa).

Residues Thr13–Gly15, Asn124, Arg165, Ser193, and Gln294 contribute to the UDP-N-acetyl-alpha-D-glucosamine site.

The protein belongs to the glycosyltransferase 28 family. MurG subfamily.

The protein localises to the cell inner membrane. The catalysed reaction is di-trans,octa-cis-undecaprenyl diphospho-N-acetyl-alpha-D-muramoyl-L-alanyl-D-glutamyl-meso-2,6-diaminopimeloyl-D-alanyl-D-alanine + UDP-N-acetyl-alpha-D-glucosamine = di-trans,octa-cis-undecaprenyl diphospho-[N-acetyl-alpha-D-glucosaminyl-(1-&gt;4)]-N-acetyl-alpha-D-muramoyl-L-alanyl-D-glutamyl-meso-2,6-diaminopimeloyl-D-alanyl-D-alanine + UDP + H(+). Its pathway is cell wall biogenesis; peptidoglycan biosynthesis. In terms of biological role, cell wall formation. Catalyzes the transfer of a GlcNAc subunit on undecaprenyl-pyrophosphoryl-MurNAc-pentapeptide (lipid intermediate I) to form undecaprenyl-pyrophosphoryl-MurNAc-(pentapeptide)GlcNAc (lipid intermediate II). The sequence is that of UDP-N-acetylglucosamine--N-acetylmuramyl-(pentapeptide) pyrophosphoryl-undecaprenol N-acetylglucosamine transferase from Rhizobium rhizogenes (strain K84 / ATCC BAA-868) (Agrobacterium radiobacter).